Reading from the N-terminus, the 1167-residue chain is Nucleolar protein 8 (1167 aa).

The RRM domain occupies 8–89 (KRLYVGGLSQ…GTLQIQLAKE (82 aa)). Residues 223 to 304 (VQKDESSTGS…NSISDDDTDS (82 aa)) are disordered. Residue lysine 225 forms a Glycyl lysine isopeptide (Lys-Gly) (interchain with G-Cter in SUMO2) linkage. Residues 248 to 275 (LTQQQAAQKRTCDSITPSKSSPVPVSDT) are compositionally biased toward polar residues. Serine 268 and serine 298 each carry phosphoserine. Threonine 302 is modified (phosphothreonine). Serine 304 bears the Phosphoserine mark. A Glycyl lysine isopeptide (Lys-Gly) (interchain with G-Cter in SUMO2) cross-link involves residue lysine 314. Serine 331 and serine 365 each carry phosphoserine. At tyrosine 376 the chain carries Phosphotyrosine. The residue at position 378 (serine 378) is a Phosphoserine. A Phosphothreonine modification is found at threonine 381. Phosphoserine is present on serine 432. Disordered regions lie at residues 435–470 (ESAL…DSEG), 499–533 (LKVP…TGLR), 590–908 (KDSV…EEEL), 932–982 (NRGS…AEKL), and 1006–1026 (YTSE…EKPE). A compositionally biased stretch (acidic residues) spans 457–470 (EDADSASELADSEG). Basic and acidic residues predominate over residues 501-510 (VPNEDTKSDG). Over residues 640–652 (NYIQPQKRQTTFE) the composition is skewed to polar residues. The span at 653-668 (SQDRKAVSPSSSEKRS) shows a compositional bias: basic and acidic residues. The residue at position 723 (serine 723) is a Phosphoserine. The segment covering 727–736 (SSKDTREIKT) has biased composition (basic and acidic residues). Positions 738–748 (FSLSISNSSDV) are enriched in polar residues. Over residues 749–776 (SAKDKHAEDNEKRLAALEARQKAKEVQK) the composition is skewed to basic and acidic residues. Positions 753–779 (KHAEDNEKRLAALEARQKAKEVQKKLV) form a coiled coil. The residue at position 795 (threonine 795) is a Phosphothreonine. At serine 801 the chain carries Phosphoserine. Basic and acidic residues predominate over residues 817-827 (HPGEEWVKESM). Residues serine 837, serine 838, serine 843, and serine 845 each carry the phosphoserine modification. A compositionally biased stretch (acidic residues) spans 837-847 (SSDDDESDSED). The span at 874–887 (GTDDRFRMDSRFLE) shows a compositional bias: basic and acidic residues. Positions 886 to 924 (LETDSEEEQEEVNEKKTAEEEELAEEKKKALNVVQSVLQ) form a coiled coil. Threonine 888 is subject to Phosphothreonine. Position 890 is a phosphoserine (serine 890). 2 stretches are compositionally biased toward basic and acidic residues: residues 940 to 968 (KFKD…PKES) and 1007 to 1026 (TSEK…EKPE). Serine 1036 is subject to Phosphoserine. A Glycyl lysine isopeptide (Lys-Gly) (interchain with G-Cter in SUMO2) cross-link involves residue lysine 1057. 2 disordered regions span residues 1071 to 1105 (IVWQ…EASL) and 1145 to 1167 (RTTN…MKPK). A phosphoserine mark is found at serine 1082, serine 1083, serine 1084, and serine 1099. Residues 1153-1167 (CRKKHKDAKRKMKPK) are compositionally biased toward basic residues.

As to quaternary structure, interacts with the GTP form of RRAGA, RRAGC and RRAGD. Interacts with NIP7. Interacts with DDX18; the interaction is RNA-dependent. Interacts with DDX47; the interaction is RNA-dependent. In terms of processing, phosphorylated. In terms of tissue distribution, expressed in various diffuse-type gastric cancers. Detected at lower levels in skeletal muscle.

It localises to the nucleus. The protein resides in the nucleolus. In terms of biological role, plays an essential role in the survival of diffuse-type gastric cancer cells. Acts as a nucleolar anchoring protein for DDX47. May be involved in regulation of gene expression at the post-transcriptional level or in ribosome biogenesis in cancer cells. This Homo sapiens (Human) protein is Nucleolar protein 8.